The sequence spans 209 residues: Small ribosomal subunit protein uS3 (209 aa).

Residues I38 to K107 form the KH type-2 domain.

This sequence belongs to the universal ribosomal protein uS3 family. As to quaternary structure, part of the 30S ribosomal subunit. Forms a tight complex with proteins S10 and S14.

In terms of biological role, binds the lower part of the 30S subunit head. Binds mRNA in the 70S ribosome, positioning it for translation. This chain is Small ribosomal subunit protein uS3, found in Thermosipho africanus (strain TCF52B).